Reading from the N-terminus, the 568-residue chain is Circadian clock protein KaiC2 (568 aa).

KaiC domains follow at residues 11–250 (IKCP…SVSQ) and 251–485 (ERIS…LTGT). Phosphoserine; by autocatalysis occurs at positions 423 and 424.

Belongs to the KaiC family. Multimerizes, probably forming homohexamers, no interaction with KaiC1 or KaiC3 is seen.

It catalyses the reaction L-seryl-[protein] + ATP = O-phospho-L-seryl-[protein] + ADP + H(+). The enzyme catalyses L-threonyl-[protein] + ATP = O-phospho-L-threonyl-[protein] + ADP + H(+). It carries out the reaction ATP + H2O = ADP + phosphate + H(+). Autophosphorylates independently of KaiA. The polypeptide is Circadian clock protein KaiC2 (Synechocystis sp. (strain ATCC 27184 / PCC 6803 / Kazusa)).